We begin with the raw amino-acid sequence, 331 residues long: 6-phosphogluconolactonase (331 aa).

This sequence belongs to the cycloisomerase 2 family.

The catalysed reaction is 6-phospho-D-glucono-1,5-lactone + H2O = 6-phospho-D-gluconate + H(+). The protein operates within carbohydrate degradation; pentose phosphate pathway; D-ribulose 5-phosphate from D-glucose 6-phosphate (oxidative stage): step 2/3. Catalyzes the hydrolysis of 6-phosphogluconolactone to 6-phosphogluconate. This is 6-phosphogluconolactonase from Klebsiella pneumoniae (strain 342).